The sequence spans 251 residues: uncharacterized protein (251 aa).

Residue Val14–Val37 coordinates NADP(+). Ser145 provides a ligand contact to substrate. Tyr158 serves as the catalytic Proton acceptor.

This sequence belongs to the short-chain dehydrogenases/reductases (SDR) family.

May be involved in the biosynthesis of a heptaene-type antibiotic. This is an uncharacterized protein from Streptomyces coelicolor.